A 206-amino-acid chain; its full sequence is N-(5'-phosphoribosyl)anthranilate isomerase (206 aa).

Belongs to the TrpF family.

The enzyme catalyses N-(5-phospho-beta-D-ribosyl)anthranilate = 1-(2-carboxyphenylamino)-1-deoxy-D-ribulose 5-phosphate. The protein operates within amino-acid biosynthesis; L-tryptophan biosynthesis; L-tryptophan from chorismate: step 3/5. This Chlamydia felis (strain Fe/C-56) (Chlamydophila felis) protein is N-(5'-phosphoribosyl)anthranilate isomerase.